Consider the following 518-residue polypeptide: Probable cytosol aminopeptidase (518 aa).

Lys270 and Asp275 together coordinate Mn(2+). The active site involves Lys282. Asp293, Asp352, and Glu354 together coordinate Mn(2+). The active site involves Arg356. Residues 495 to 507 (SRTTRQPGSTGET) show a composition bias toward polar residues. The disordered stretch occupies residues 495–518 (SRTTRQPGSTGETGSRKNRRKSKE).

The protein belongs to the peptidase M17 family. Mn(2+) is required as a cofactor.

The protein resides in the cytoplasm. It catalyses the reaction Release of an N-terminal amino acid, Xaa-|-Yaa-, in which Xaa is preferably Leu, but may be other amino acids including Pro although not Arg or Lys, and Yaa may be Pro. Amino acid amides and methyl esters are also readily hydrolyzed, but rates on arylamides are exceedingly low.. It carries out the reaction Release of an N-terminal amino acid, preferentially leucine, but not glutamic or aspartic acids.. Its function is as follows. Presumably involved in the processing and regular turnover of intracellular proteins. Catalyzes the removal of unsubstituted N-terminal amino acids from various peptides. This chain is Probable cytosol aminopeptidase, found in Nitrosospira multiformis (strain ATCC 25196 / NCIMB 11849 / C 71).